The primary structure comprises 554 residues: Perforin-1 (554 aa).

Positions 1-20 (MAAYLFLLGLFLLLPRPVPA) are cleaved as a signal peptide. 3 cysteine pairs are disulfide-bonded: Cys-22–Cys-75, Cys-30–Cys-72, and Cys-101–Cys-175. Residues 26–374 (TRSECKQNHK…HYVMSRARWR (349 aa)) form the MACPF domain. The beta stranded transmembrane segment at 128–148 (WRAGLDVNPKPEANVHVSVAG) threads the bilayer. Asn-204 carries N-linked (GlcNAc...) asparagine glycosylation. 4 disulfides stabilise this stretch: Cys-241–Cys-407, Cys-376–Cys-392, Cys-380–Cys-394, and Cys-396–Cys-406. The beta stranded transmembrane segment at 256–278 (CLSVEAQVSIGAQASVSSEYKAC) threads the bilayer. One can recognise an EGF-like domain in the interval 375 to 407 (DCNRPCRAGQHKSSRDSCQCVCQDSNVTNQDCC). Residues 395-513 (VCQDSNVTNQ…FHEVNCPLNH (119 aa)) enclose the C2 domain. Residue Asn-400 is glycosylated (N-linked (GlcNAc...) asparagine). 12 residues coordinate Ca(2+): Gly-428, Asp-429, Thr-432, Asp-435, Asn-454, Asp-483, Ala-484, Asp-485, Trp-488, Asp-489, Asp-490, and Asp-491. 2 disulfides stabilise this stretch: Cys-496-Cys-509 and Cys-524-Cys-533. An N-linked (GlcNAc...) asparagine glycan is attached at Asn-548.

This sequence belongs to the complement C6/C7/C8/C9 family. In terms of assembly, monomer, as soluble protein. Homooligomer; homooligomerizes to form a pore-forming ring. Ca(2+) is required as a cofactor. N-glycosylated. As to expression, detected in large granular lymphocytes and lymphokine-activated killer cells.

The protein resides in the cytolytic granule. It is found in the secreted. It localises to the cell membrane. The protein localises to the endosome lumen. Its function is as follows. Pore-forming protein that plays a key role in granzyme-mediated programmed cell death, and in defense against virus-infected or neoplastic cells. Can insert into the membrane of target cells in its calcium-bound form, oligomerize and form large pores. Promotes cytolysis and apoptosis of target cells by mediating the passage and uptake of cytotoxic granzymes. Facilitates the delivery of cationic cargo protein, while anionic or neural proteins are not delivered efficiently. Perforin pores allow the release of mature caspase-7 (CASP7) into the extracellular milieu. This Rattus norvegicus (Rat) protein is Perforin-1 (Prf1).